A 206-amino-acid chain; its full sequence is Ribosomal RNA large subunit methyltransferase E (206 aa).

Positions 60, 62, 80, 96, and 121 each coordinate S-adenosyl-L-methionine. Lysine 161 functions as the Proton acceptor in the catalytic mechanism.

The protein belongs to the class I-like SAM-binding methyltransferase superfamily. RNA methyltransferase RlmE family.

The protein resides in the cytoplasm. The enzyme catalyses uridine(2552) in 23S rRNA + S-adenosyl-L-methionine = 2'-O-methyluridine(2552) in 23S rRNA + S-adenosyl-L-homocysteine + H(+). Specifically methylates the uridine in position 2552 of 23S rRNA at the 2'-O position of the ribose in the fully assembled 50S ribosomal subunit. In Francisella philomiragia subsp. philomiragia (strain ATCC 25017 / CCUG 19701 / FSC 153 / O#319-036), this protein is Ribosomal RNA large subunit methyltransferase E.